A 654-amino-acid chain; its full sequence is Protein fem-1 homolog A-like (654 aa).

7 ANK repeats span residues 2–31 (DLHT…REEL), 40–70 (GGGT…SVEA), 82–111 (EGAP…SVNR), 115–145 (TNST…DLEV), 149–178 (HGHT…QVNR), 182–211 (KGNT…RMER), and 214–243 (YGMT…SHEQ). Serine 108 carries the phosphoserine modification. Residues 241-265 (HEQLSGTELPGEGSSQMAGNHCSTP) form a disordered region. Residues 253–263 (GSSQMAGNHCS) show a composition bias toward polar residues. TPR repeat units lie at residues 283-317 (VEAL…RHQG) and 375-408 (SYYI…QQNN). 2 ANK repeats span residues 519–561 (NGFT…DPDS) and 565–594 (DNNS…HMDA). At serine 608 the chain carries Phosphoserine.

It belongs to the fem-1 family. In terms of assembly, component of a CRL2 E3 ubiquitin-protein ligase complex, also named ECS (Elongin BC-CUL2/5-SOCS-box protein) complex, composed of CUL2, Elongin BC (ELOB and ELOC), RBX1 and substrate-specific adapter FEM1A.

It is found in the mitochondrion. It localises to the cytoplasm. It participates in protein modification; protein ubiquitination. Substrate-recognition component of a Cul2-RING (CRL2) E3 ubiquitin-protein ligase complex of the DesCEND (destruction via C-end degrons) pathway, which recognizes a C-degron located at the extreme C terminus of target proteins, leading to their ubiquitination and degradation. The C-degron recognized by the DesCEND pathway is usually a motif of less than ten residues and can be present in full-length proteins, truncated proteins or proteolytically cleaved forms. The CRL2(FEM1A) complex specifically recognizes proteins with an arginine at the C-terminus: recognizes and binds proteins ending with -Lys/Arg-Xaa-Arg and -Lys/Arg-Xaa-Xaa-Arg C-degrons, such as SIL1 or OR51B2, leading to their ubiquitination and degradation. In Mus musculus (Mouse), this protein is Protein fem-1 homolog A-like.